The sequence spans 122 residues: UPF0145 protein BceJ2315_57450 (122 aa).

This sequence belongs to the UPF0145 family.

The protein is UPF0145 protein BceJ2315_57450 of Burkholderia cenocepacia (strain ATCC BAA-245 / DSM 16553 / LMG 16656 / NCTC 13227 / J2315 / CF5610) (Burkholderia cepacia (strain J2315)).